The sequence spans 318 residues: MLLKMEEMVIEKKNEMKQTGDFVSGVSKNGEYETAVALEKQEDLKTTSKSLIELEEEKQSKEKQLKSELLKKKLEERPKLDNLEDLQTIINLKKRKRVKKVKVPVVKEPEPEETIGDVDQMTFFKAALDNKMSIIEKYLADGGDPNTCDEYKRTALHRACSEGHTAIVEKLIEAGANIEFKDMLESTALHWTCRGGSVETLKLLLNKGAAINARDKLLSTPLHVAVRTGYYECGEHLIACEADLNAKDREGDTPMHDGVRLNRYKMIRLLILYGVNLNIKNCAGKTPMELVMQWQNGAKEIFNGLQNKSYKNSHISKF.

Positions 37–77 (ALEKQEDLKTTSKSLIELEEEKQSKEKQLKSELLKKKLEER) form a coiled coil. 5 ANK repeats span residues 151–180 (YKRT…NIEF), 184–213 (LEST…AINA), 217–246 (LLST…DLNA), 250–279 (EGDT…NLNI), and 283–314 (AGKT…KNSH).

Its subcellular location is the nucleus. May act as a nuclear transcription factor that negatively regulates the expression of cardiac genes. The chain is Ankyrin repeat domain-containing protein 1 (ankrd1) from Xenopus laevis (African clawed frog).